The following is a 468-amino-acid chain: tRNA (guanine(37)-N(1))-methyltransferase 1 (468 aa).

S-adenosyl-L-methionine is bound by residues His207, 245–246 (DL), and 273–274 (DA). The segment at 301–348 (KEAAVSRGGETNSSGEEIRESNASINEPLGANKKPSGTTKTENGVGKD) is disordered. The segment covering 309 to 325 (GETNSSGEEIRESNASI) has biased composition (polar residues). Asn380 contributes to the S-adenosyl-L-methionine binding site.

Belongs to the class I-like SAM-binding methyltransferase superfamily. TRM5/TYW2 family. As to quaternary structure, monomer.

The protein resides in the mitochondrion matrix. It is found in the nucleus. It localises to the cytoplasm. The enzyme catalyses guanosine(37) in tRNA + S-adenosyl-L-methionine = N(1)-methylguanosine(37) in tRNA + S-adenosyl-L-homocysteine + H(+). Specifically methylates the N1 position of guanosine-37 in various cytoplasmic and mitochondrial tRNAs. Methylation is not dependent on the nature of the nucleoside 5' of the target nucleoside. This is the first step in the biosynthesis of wybutosine (yW), a modified base adjacent to the anticodon of tRNAs and required for accurate decoding. This Arabidopsis thaliana (Mouse-ear cress) protein is tRNA (guanine(37)-N(1))-methyltransferase 1.